Consider the following 162-residue polypeptide: uncharacterized protein (162 aa).

Pentapeptide repeat domains lie at 33 to 72, 73 to 112, and 113 to 152; these read ASLI…NMTE, VCLI…DLRK, and ANLS…YISD.

This is an uncharacterized protein from Synechocystis sp. (strain ATCC 27184 / PCC 6803 / Kazusa).